Consider the following 208-residue polypeptide: Large ribosomal subunit protein bL25 (208 aa).

The span at 186 to 201 (PAGEKSAAAEEGAAAA) shows a compositional bias: low complexity. The segment at 186–208 (PAGEKSAAAEEGAAAAGEDKPAA) is disordered.

Belongs to the bacterial ribosomal protein bL25 family. CTC subfamily. As to quaternary structure, part of the 50S ribosomal subunit; part of the 5S rRNA/L5/L18/L25 subcomplex. Contacts the 5S rRNA. Binds to the 5S rRNA independently of L5 and L18.

This is one of the proteins that binds to the 5S RNA in the ribosome where it forms part of the central protuberance. The chain is Large ribosomal subunit protein bL25 from Ralstonia pickettii (strain 12J).